A 577-amino-acid polypeptide reads, in one-letter code: MPTLAERLGSSAANASGSDKSSHDREQELRSRLFASKQTSRNTAHQDLASSERRSIDRELPLASRHRSRSPLSSPQNGSSPRRQRGSPSYENQPSTVSARMPPPPQPYIHPDRRPPRPQADRWVPPPREDVQSDRSPRSYPRRRDDQRWQANERRANQDDSRRAWTSSRSGDRRRYFDSNDDRNPRQEDREAPSEYGAAQWKRLQRDPYASSMSSGGNQGDGNGGFFSSRNEQRKKSTISIWPPSPPHPTLDSDEEREKRKRHRDSSSRHRDKDKDKDRDKDKGKRDRKHSSSDKHHSSSRSHRHHSSTSRRRRSSRHSEDDKASRHRHTRSSRSHHRDDDDDDDDEDVDVDGRRKSKRSRTKVSDGSDSGRSESETDSDSDARSSRHRRRHHKSDRSSTHRRRESEKRHRSSGQRSESESSLHSEHNQKETAKSRRDSVSASASDSDVEVGPTLPTVAADGKPVDPRAYGGALLPGEGSAMASYVQDGKRIPRRGEIGLTSDQIEAYEKAGYVMSGSRHHRMNAVRMRKENQVISAEEKRTMLRLQAEEKAKKEREIVSQFKELVDTLQPGSSEAK.

The disordered stretch occupies residues 1-479; sequence MPTLAERLGS…YGGALLPGEG (479 aa). Residues 20–31 are compositionally biased toward basic and acidic residues; the sequence is KSSHDREQELRS. Over residues 36–49 the composition is skewed to polar residues; sequence SKQTSRNTAHQDLA. The span at 50-60 shows a compositional bias: basic and acidic residues; that stretch reads SSERRSIDREL. Residues 70–89 show a composition bias toward low complexity; the sequence is SPLSSPQNGSSPRRQRGSPS. Basic and acidic residues-rich tracts occupy residues 127 to 163, 170 to 193, and 265 to 297; these read PRED…DSRR, SGDR…REAP, and DSSS…DKHH. Basic residues-rich tracts occupy residues 298-316 and 325-336; these read SSSR…RRSS and SRHRHTRSSRSH. A compositionally biased stretch (acidic residues) spans 340-350; the sequence is DDDDDDDEDVD. The span at 363–385 shows a compositional bias: basic and acidic residues; it reads KVSDGSDSGRSESETDSDSDARS. The segment covering 386–395 has biased composition (basic residues); sequence SRHRRRHHKS. Basic and acidic residues-rich tracts occupy residues 396-408 and 417-439; these read DRSS…ESEK and SESE…RRDS. Residues 529 to 570 are a coiled coil; the sequence is RKENQVISAEEKRTMLRLQAEEKAKKEREIVSQFKELVDTLQ.

Belongs to the NKAP family.

The polypeptide is NKAP family protein UM04995 (Mycosarcoma maydis (Corn smut fungus)).